The primary structure comprises 179 residues: Cytoglobin-2 (179 aa).

Residues 1–11 (MEKEREDEETE) show a composition bias toward acidic residues. The tract at residues 1–20 (MEKEREDEETEGRERPEPLT) is disordered. One can recognise a Globin domain in the interval 18-167 (PLTDVERGII…LYWHITGAYT (150 aa)). Positions 81 and 113 each coordinate heme b.

The protein belongs to the globin family. As to quaternary structure, monomeric. As to expression, expressed in all tissues examined, with highest levels in brain and eye, and considerably lower levels in skin, gut, heart, gill, liver and muscle.

Its subcellular location is the cytoplasm. It is found in the nucleus. It catalyses the reaction Fe(II)-heme b-[protein] + nitric oxide + O2 = Fe(III)-heme b-[protein] + nitrate. It carries out the reaction Fe(III)-heme b-[protein] + nitric oxide + H2O = Fe(II)-heme b-[protein] + nitrite + 2 H(+). The catalysed reaction is 2 superoxide + 2 H(+) = H2O2 + O2. The enzyme catalyses H2O2 + AH2 = A + 2 H2O. Functionally, probable multifunctional globin with a hexacoordinated heme iron required for the catalysis of various reactions depending on redox condition of the cell as well as oxygen availability. Has a nitric oxide dioxygenase (NOD) activity and is most probably involved in cell-mediated and oxygen-dependent nitric oxide consumption. Under normoxic conditions functions as a nitric oxide dioxygenase (NOD) but under hypoxic conditions the globin may switch its function to that of a nitrite (NO2) reductase (NiR), generating nitric oxide. Could also have peroxidase and superoxide dismutase activities, detoxifying reactive oxygen species and protecting cells against oxidative stress. Also binds dioxygen with low affinity and could function as an oxygen sensor but has probably no function as a respiratory oxygen carrier. In Danio rerio (Zebrafish), this protein is Cytoglobin-2.